The primary structure comprises 1168 residues: Homeodomain-interacting protein kinase 2 (1168 aa).

Position 16 is a phosphoserine (Ser16). Lys32 is covalently cross-linked (Glycyl lysine isopeptide (Lys-Gly) (interchain with G-Cter in SUMO); alternate). A Glycyl lysine isopeptide (Lys-Gly) (interchain with G-Cter in SUMO2); alternate cross-link involves residue Lys32. A transcriptional corepression region spans residues 97 to 230 (SASSTSVTGQ…TNEIVAIKIL (134 aa)). Phosphoserine is present on residues Ser118 and Ser135. Phosphothreonine is present on Thr141. The interval 189-520 (HEVLCSMTNT…DADKRITPIE (332 aa)) is interaction with DAXX. The Protein kinase domain occupies 199-527 (YEVLEFLGRG…PIETLNHPFV (329 aa)). ATP-binding positions include 205–213 (LGRGTFGQV) and Lys228. A phosphothreonine mark is found at Thr252 and Thr273. The Proton acceptor role is filled by Asp324. The residue at position 361 (Tyr361) is a Phosphotyrosine. Residue Ser441 is modified to Phosphoserine. A phosphothreonine mark is found at Thr482, Thr517, and Thr566. The interaction with SKI and SMAD1 stretch occupies residues 539 to 816 (THVKSCFQNM…KENTPPRCAM (278 aa)). The segment at 595–772 (PSAASMAAVA…MRQQPTSTTS (178 aa)) is interaction with DAZAP2. Residues Ser607 and Ser641 each carry the phosphoserine modification. Thr660 is subject to Phosphothreonine. Residues 724-869 (RNTHAHGSHY…ITISSDTDEE (146 aa)) are interaction with POU4F1. Positions 746–848 (HVTLPAAQPL…TRERQRQTIV (103 aa)) are interaction with CTBP1. The segment at 759–869 (VAHVMRQQPT…ITISSDTDEE (111 aa)) is interaction with HMGA1. The segment at 764 to 820 (RQQPTSTTSSRKSKQHQPSMRNVSTCEVTSSQSTSSPQRSKRVKENTPPRCAMVHSS) is disordered. The segment covering 765–791 (QQPTSTTSSRKSKQHQPSMRNVSTCEV) has biased composition (polar residues). Positions 774–777 (RKSK) match the Nuclear localization signal 1 (NLS1) motif. A phosphoserine mark is found at Ser787 and Ser799. Residues 792–801 (TSSQSTSSPQ) are compositionally biased toward low complexity. Positions 804–807 (KRVK) match the Nuclear localization signal 2 (NLS2) motif. The tract at residues 812–907 (PRCAMVHSSP…YSDSSSNTSP (96 aa)) is interaction with TP53 and TP73. Residues 845-879 (QTIVIPDTPSPTVSVITISSDTDEEEEQKHAPTST) are interaction with UBE2I. The tract at residues 845-952 (QTIVIPDTPS…PLKTQASEVL (108 aa)) is localization to nuclear speckles. The required for localization to nuclear speckles stretch occupies residues 845-952 (QTIVIPDTPS…PLKTQASEVL (108 aa)). An interaction with UBL1 region spans residues 854–876 (SPTVSVITISSDTDEEEEQKHAP). Residues 856–880 (TVSVITISSDTDEEEEQKHAPTSTV) form an SUMO interaction motifs (SIM); required for nuclear localization and kinase activity region. The disordered stretch occupies residues 894 to 936 (HDSPYSDSSSNTSPYSVQQRTGHNGTNTLDTKGALENHCTGNP). The span at 895 to 909 (DSPYSDSSSNTSPYS) shows a compositional bias: low complexity. The residue at position 906 (Ser906) is a Phosphoserine. An interaction with AXIN1 region spans residues 907 to 1022 (PYSVQQRTGH…LSQAQPHMAT (116 aa)). The span at 910 to 923 (VQQRTGHNGTNTLD) shows a compositional bias: polar residues. Glycyl lysine isopeptide (Lys-Gly) (interchain with G-Cter in SUMO2) cross-links involve residues Lys925 and Lys945. The interval 956-1168 (DSLGPAVSTG…PAKVNQYPYI (213 aa)) is autoinhibitory domain (AID). Residues 960–1030 (PAVSTGHHSS…ATDRTGSHRR (71 aa)) are disordered. Ser963 is subject to Phosphoserine. Low complexity-rich tracts occupy residues 965–991 (GHHS…GSSS) and 998–1018 (QQRP…QAQP). 3 positions are modified to phosphoserine: Ser1014, Ser1125, and Ser1158. Lys1161 participates in a covalent cross-link: Glycyl lysine isopeptide (Lys-Gly) (interchain with G-Cter in SUMO).

It belongs to the protein kinase superfamily. CMGC Ser/Thr protein kinase family. HIPK subfamily. Interacts with CREB1, SIAH1, WSB1, CBX4, TRADD, p53/TP53, TP73, TP63, CREBBP, DAXX, P53DINP1, SKI, SMAD1, SMAD2 and SMAD3, but not SMAD4. Interacts with ATF1, PML, RUNX1, EP300, NKX1-2, NKX2-5, UBE2I, HMGA1, CTBP1, AXIN1, NLK, MYB, POU4F1, POU4F2, POU4F3, UBE2I, UBL1 and ZBTB4. Probably part of a complex consisting of p53/TP53, HIPK2 and AXIN1. Interacts with SP100; positively regulates TP53-dependent transcription. Interacts with DAZAP2; the interaction results in phosphorylation of DAZAP2 which causes localization of DAZAP2 to the nucleus, reduces interaction of DAZAP2 with HIPK2 and prevents DAZAP2-dependent degradation of HIPK2. Interacts with SIAH1; the interaction is promoted by DAZAP2 and results in SIAH1-mediated ubiquitination and subsequent proteasomal degradation of HIPK2. Autophosphorylation at Tyr-361 in the activation loop activates the kinase and promotes nuclear localization. Post-translationally, sumoylated. When conjugated it is directed to nuclear speckles. Desumoylated by SENP1. Sumoylation on Lys-32 is promoted by the E3 SUMO-protein ligase CBX4. In terms of processing, ubiquitinated by FBXO3, WSB1 and SIAH1, leading to rapid proteasome-dependent degradation. The degradation mediated by FBXO3, but not ubiquitination, is prevented in the presence of PML. The degradation mediated by WSB1 and SIAH1 is reversibly reduced upon DNA damage. Cleaved at Asp-895 and Asp-956 by CASP6 in a p53/TP53-dependent manner. The cleaved form lacks the autoinhibitory C-terminal domain (AID), resulting in a hyperactive kinase, which potentiates p53/TP53 Ser-46 phosphorylation and subsequent activation of the cell death machinery.

The protein resides in the nucleus. It localises to the PML body. It is found in the cytoplasm. The enzyme catalyses L-seryl-[protein] + ATP = O-phospho-L-seryl-[protein] + ADP + H(+). It catalyses the reaction L-threonyl-[protein] + ATP = O-phospho-L-threonyl-[protein] + ADP + H(+). Functionally, serine/threonine-protein kinase involved in transcription regulation, p53/TP53-mediated cellular apoptosis and regulation of the cell cycle. Acts as a corepressor of several transcription factors, including SMAD1 and POU4F1/Brn3a and probably NK homeodomain transcription factors. Phosphorylates PDX1, ATF1, PML, p53/TP53, CREB1, CTBP1, CBX4, RUNX1, EP300, CTNNB1, HMGA1, ZBTB4 and DAZAP2. Inhibits cell growth and promotes apoptosis through the activation of p53/TP53 both at the transcription level and at the protein level (by phosphorylation and indirect acetylation). The phosphorylation of p53/TP53 may be mediated by a p53/TP53-HIPK2-AXIN1 complex. Involved in the response to hypoxia by acting as a transcriptional co-suppressor of HIF1A. Mediates transcriptional activation of TP73. In response to TGFB, cooperates with DAXX to activate JNK. Negative regulator through phosphorylation and subsequent proteasomal degradation of CTNNB1 and the antiapoptotic factor CTBP1. In the Wnt/beta-catenin signaling pathway acts as an intermediate kinase between MAP3K7/TAK1 and NLK to promote the proteasomal degradation of MYB. Phosphorylates CBX4 upon DNA damage and promotes its E3 SUMO-protein ligase activity. Activates CREB1 and ATF1 transcription factors by phosphorylation in response to genotoxic stress. In response to DNA damage, stabilizes PML by phosphorylation. PML, HIPK2 and FBXO3 may act synergically to activate p53/TP53-dependent transactivation. Promotes angiogenesis, and is involved in erythroid differentiation, especially during fetal liver erythropoiesis. Phosphorylation of RUNX1 and EP300 stimulates EP300 transcription regulation activity. Triggers ZBTB4 protein degradation in response to DNA damage. In response to DNA damage, phosphorylates DAZAP2 which localizes DAZAP2 to the nucleus, reduces interaction of DAZAP2 with HIPK2 and prevents DAZAP2-dependent ubiquitination of HIPK2 by E3 ubiquitin-protein ligase SIAH1 and subsequent proteasomal degradation. Modulates HMGA1 DNA-binding affinity. In response to high glucose, triggers phosphorylation-mediated subnuclear localization shifting of PDX1. Involved in the regulation of eye size, lens formation and retinal lamination during late embryogenesis. This Mesocricetus auratus (Golden hamster) protein is Homeodomain-interacting protein kinase 2 (Hipk2).